A 128-amino-acid polypeptide reads, in one-letter code: UPF0325 protein YaeH (128 aa).

This sequence belongs to the UPF0325 family.

The sequence is that of UPF0325 protein YaeH from Escherichia fergusonii (strain ATCC 35469 / DSM 13698 / CCUG 18766 / IAM 14443 / JCM 21226 / LMG 7866 / NBRC 102419 / NCTC 12128 / CDC 0568-73).